The primary structure comprises 111 residues: Ghrelin (111 aa).

Residues 1–26 (MRQMKRTAYIILLVCVLALWMDSVQA) form the signal peptide. The span at 28-37 (SSFLSPSQRP) shows a compositional bias: polar residues. Residues 28-53 (SSFLSPSQRPQGKDKKPPRVGRRDSD) form a disordered region. Ser-29 is lipidated: O-decanoyl serine; alternate. A lipid anchor (O-hexanoyl serine; alternate) is attached at Ser-29. A lipid anchor (O-octanoyl serine; alternate) is attached at Ser-29. The segment covering 38 to 53 (QGKDKKPPRVGRRDSD) has biased composition (basic and acidic residues). Val-47 is subject to Valine amide. Positions 51–111 (DSDGILDLFM…DLLMDTPAKE (61 aa)) are cleaved as a propeptide — removed in mature form.

This sequence belongs to the motilin family. Post-translationally, O-octanoylated by GOAT/MBOAT4. O-octanoylation or O-decanoylation is essential for activity. The O-decanoylated form ghrelin-21-C10 differs in the length of the carbon backbone of the carboxylic acid forming an ester bond with Ser-29. 44% of eel ghrelin is O-decanoylated. As to expression, highest levels in stomach and anterior intestine. Lower levels in posterior intestine, kidney and brain. Low levels in heart, head kidney and middle intestine.

The protein resides in the secreted. In terms of biological role, ligand for growth hormone secretagogue receptor type 1 (GHSR). Induces the release of growth hormone from the pituitary. Has an appetite-stimulating effect, induces adiposity and stimulates gastric acid secretion. Involved in growth regulation. The chain is Ghrelin (ghrl) from Anguilla japonica (Japanese eel).